The primary structure comprises 356 residues: uncharacterized protein (356 aa).

This is an uncharacterized protein from Methanocaldococcus jannaschii (strain ATCC 43067 / DSM 2661 / JAL-1 / JCM 10045 / NBRC 100440) (Methanococcus jannaschii).